The primary structure comprises 804 residues: E3 ubiquitin-protein ligase RNF10 (804 aa).

Low complexity-rich tracts occupy residues 1-31, 78-90, and 104-113; these read MPQSSPSAAATASDMDKNSGSNSSSASSGSS, SNQSRRSNSQKSK, and SKPFSSSSNG. A disordered region spans residues 1–134; it reads MPQSSPSAAA…AEFSPAQFSG (134 aa). Residue serine 5 is modified to Phosphoserine. Phosphoserine is present on serine 110. Residues 114-124 are compositionally biased toward basic and acidic residues; sequence GRRDEVAEAQR. The residue at position 128 (serine 128) is a Phosphoserine. Residues 225–267 form an RING-type zinc finger; it reads CPICLYPPTAAKITRCGHIFCWACILHYLSLSEKTWSKCPICY. 3 disordered regions span residues 589 to 611, 646 to 665, and 715 to 804; these read DIEKRKRQRQKKAREERRRERRI, DSALGPTSTEGHGALSLSPL, and KADG…VHTK. Over residues 601-611 the composition is skewed to basic and acidic residues; the sequence is AREERRRERRI. Positions 646-655 are enriched in polar residues; the sequence is DSALGPTSTE. Positions 715–729 are enriched in basic and acidic residues; that stretch reads KADGWPKTAPKKDDN. Residues 795 to 804 are compositionally biased toward polar residues; the sequence is LFSTSVVHTK.

It belongs to the RNF10 family. Interacts with MEOX2.

It is found in the cytoplasm. The protein resides in the nucleus. It catalyses the reaction S-ubiquitinyl-[E2 ubiquitin-conjugating enzyme]-L-cysteine + [acceptor protein]-L-lysine = [E2 ubiquitin-conjugating enzyme]-L-cysteine + N(6)-ubiquitinyl-[acceptor protein]-L-lysine.. The protein operates within protein modification; protein ubiquitination. Functionally, E3 ubiquitin-protein ligase that catalyzes monoubiquitination of 40S ribosomal proteins RPS2/us5 and RPS3/us3 in response to ribosome stalling. Part of a ribosome quality control that takes place when ribosomes have stalled during translation initiation (iRQC): RNF10 acts by mediating monoubiquitination of RPS2/us5 and RPS3/us3, promoting their degradation by the proteasome. Also promotes ubiquitination of 40S ribosomal proteins in response to ribosome stalling during translation elongation. The action of RNF10 in iRQC is counteracted by USP10. May also act as a transcriptional factor involved in the regulation of MAG (Myelin-associated glycoprotein) expression. Acts as a regulator of Schwann cell differentiation and myelination. This is E3 ubiquitin-protein ligase RNF10 from Mus musculus (Mouse).